Reading from the N-terminus, the 532-residue chain is Probable galacturonosyltransferase 14 (532 aa).

The Cytoplasmic segment spans residues 1 to 40 (MQLHISPSMRSITISSSNEFIDLMKIKVAARHISYRTLFH). A helical; Signal-anchor for type II membrane protein transmembrane segment spans residues 41–61 (TILILAFLLPFVFILTAVVTL). Residues 62-532 (EGVNKCSSID…DFIKNCHILE (471 aa)) lie on the Lumenal side of the membrane. N305, N395, N444, and N519 each carry an N-linked (GlcNAc...) asparagine glycan.

It belongs to the glycosyltransferase 8 family. In terms of tissue distribution, expressed in roots, inflorescences, siliques, leaves and stems. Accumulates in pollen grains.

The protein resides in the golgi apparatus membrane. Its pathway is glycan metabolism; pectin biosynthesis. Its function is as follows. May be involved in pectin and/or xylans biosynthesis in cell walls. Together with GAUT13, required for pollen tube growth, possibly through the regulation of pectin biosynthesis and repartition in the pollen tube wall. The chain is Probable galacturonosyltransferase 14 from Arabidopsis thaliana (Mouse-ear cress).